Reading from the N-terminus, the 2833-residue chain is Reticulocyte-binding protein 1 (2833 aa).

Positions Met-1–Gly-22 are cleaved as a signal peptide. The segment covering Glu-75–His-91 has biased composition (basic and acidic residues). Disordered regions lie at residues Glu-75–Phe-95, His-112–Glu-133, and Lys-819–Arg-860. Over residues Lys-819–Ser-836 the composition is skewed to basic and acidic residues. Residues Val-837–Gln-849 are compositionally biased toward acidic residues. A Cell attachment site motif is present at residues Arg-2563–Asp-2565. Residues Glu-2619–Ser-2755 are disordered. Basic and acidic residues-rich tracts occupy residues Asn-2621–Ala-2633 and Glu-2640–Val-2652. Positions Met-2655–Glu-2670 are enriched in polar residues. Over residues Leu-2706–Met-2720 the composition is skewed to acidic residues. Residues Thr-2731–Asn-2742 show a composition bias toward basic and acidic residues. Polar residues predominate over residues Thr-2743–Ser-2755.

As to quaternary structure, homodimer.

It is found in the membrane. Functionally, involved in reticulocyte adhesion. Specifically binds to human reticulocyte cells. The polypeptide is Reticulocyte-binding protein 1 (RBP1) (Plasmodium vivax (strain Belem)).